Reading from the N-terminus, the 202-residue chain is Casparian strip membrane protein 1 (202 aa).

At 1 to 42 (MEKNKSTAIEIAESSKESKGKAPLLAAAVGHDRAAGYKRGVS) the chain is on the cytoplasmic side. The chain crosses the membrane as a helical span at residues 43-63 (IFDLFLRISAATAALAATIVM). At 64–90 (GTTEQTLPFFTQFFQFRAQYDDLPTFT) the chain is on the extracellular side. The helical transmembrane segment at 91 to 111 (FFVVGMAIVTGYLILSVPFSI) threads the bilayer. The Cytoplasmic segment spans residues 112 to 130 (VCIARPVAIGPRFLLIVGD). A helical membrane pass occupies residues 131–151 (TLKAVLATSAAGSSAAIVYLA). Residues 152 to 173 (HNGNSDANWLDICQQFNDFCQR) lie on the Extracellular side of the membrane. Residues 174 to 194 (VSGAVVAAFVAVVLLIFLIVL) traverse the membrane as a helical segment. Over 195-202 (SAMALRKN) the chain is Cytoplasmic.

The protein belongs to the Casparian strip membrane proteins (CASP) family. Homodimer and heterodimers.

Its subcellular location is the cell membrane. In terms of biological role, regulates membrane-cell wall junctions and localized cell wall deposition. Required for establishment of the Casparian strip membrane domain (CSD) and the subsequent formation of Casparian strips, a cell wall modification of the root endodermis that determines an apoplastic barrier between the intraorganismal apoplasm and the extraorganismal apoplasm and prevents lateral diffusion. This Striga hermonthica (Purple witchweed) protein is Casparian strip membrane protein 1.